The chain runs to 331 residues: Fructose-1,6-bisphosphatase class 1 (331 aa).

The Mg(2+) site is built by glutamate 80, aspartate 98, leucine 100, and aspartate 101. Residues 101–104 (DGSS) and asparagine 189 contribute to the substrate site. A Mg(2+)-binding site is contributed by glutamate 261.

This sequence belongs to the FBPase class 1 family. As to quaternary structure, homotetramer. Requires Mg(2+) as cofactor.

The protein localises to the cytoplasm. The enzyme catalyses beta-D-fructose 1,6-bisphosphate + H2O = beta-D-fructose 6-phosphate + phosphate. Its pathway is carbohydrate biosynthesis; gluconeogenesis. The polypeptide is Fructose-1,6-bisphosphatase class 1 (Rhodobacter capsulatus (strain ATCC BAA-309 / NBRC 16581 / SB1003)).